Consider the following 157-residue polypeptide: ATP synthase subunit b (157 aa).

The chain crosses the membrane as a helical span at residues 7–29 (MFGQLIMFTMFTWFCMKFVWPPI).

This sequence belongs to the ATPase B chain family. F-type ATPases have 2 components, F(1) - the catalytic core - and F(0) - the membrane proton channel. F(1) has five subunits: alpha(3), beta(3), gamma(1), delta(1), epsilon(1). F(0) has three main subunits: a(1), b(2) and c(10-14). The alpha and beta chains form an alternating ring which encloses part of the gamma chain. F(1) is attached to F(0) by a central stalk formed by the gamma and epsilon chains, while a peripheral stalk is formed by the delta and b chains.

It is found in the cell inner membrane. F(1)F(0) ATP synthase produces ATP from ADP in the presence of a proton or sodium gradient. F-type ATPases consist of two structural domains, F(1) containing the extramembraneous catalytic core and F(0) containing the membrane proton channel, linked together by a central stalk and a peripheral stalk. During catalysis, ATP synthesis in the catalytic domain of F(1) is coupled via a rotary mechanism of the central stalk subunits to proton translocation. In terms of biological role, component of the F(0) channel, it forms part of the peripheral stalk, linking F(1) to F(0). The chain is ATP synthase subunit b from Ruthia magnifica subsp. Calyptogena magnifica.